Reading from the N-terminus, the 274-residue chain is NH(3)-dependent NAD(+) synthetase (274 aa).

Gly-46–Ser-53 lines the ATP pocket. Position 52 (Asp-52) interacts with Mg(2+). Deamido-NAD(+) is bound at residue Arg-140. Residue Thr-160 coordinates ATP. Glu-165 lines the Mg(2+) pocket. Residues Lys-173 and Asp-180 each coordinate deamido-NAD(+). Positions 189 and 211 each coordinate ATP. Deamido-NAD(+) is bound at residue His-260–Lys-261.

It belongs to the NAD synthetase family. As to quaternary structure, homodimer.

The catalysed reaction is deamido-NAD(+) + NH4(+) + ATP = AMP + diphosphate + NAD(+) + H(+). It functions in the pathway cofactor biosynthesis; NAD(+) biosynthesis; NAD(+) from deamido-NAD(+) (ammonia route): step 1/1. Functionally, catalyzes the ATP-dependent amidation of deamido-NAD to form NAD. Uses ammonia as a nitrogen source. This is NH(3)-dependent NAD(+) synthetase from Streptococcus pyogenes serotype M18 (strain MGAS8232).